A 403-amino-acid chain; its full sequence is D-alanyl-D-alanine carboxypeptidase DacA (403 aa).

An N-terminal signal peptide occupies residues 1 to 29; it reads MNTIFSARIMKRLALTTALCTAFISAAHA. Residue Ser-73 is the Acyl-ester intermediate of the active site. Lys-76 (proton acceptor) is an active-site residue. Ser-139 is an active-site residue. Lys-242 is a binding site for substrate.

The protein belongs to the peptidase S11 family.

The protein resides in the cell inner membrane. It catalyses the reaction Preferential cleavage: (Ac)2-L-Lys-D-Ala-|-D-Ala. Also transpeptidation of peptidyl-alanyl moieties that are N-acyl substituents of D-alanine.. Its pathway is cell wall biogenesis; peptidoglycan biosynthesis. In terms of biological role, removes C-terminal D-alanyl residues from sugar-peptide cell wall precursors. The sequence is that of D-alanyl-D-alanine carboxypeptidase DacA (dacA) from Escherichia coli O157:H7.